A 404-amino-acid chain; its full sequence is Coenzyme F420H(2) oxidase (404 aa).

Fe cation is bound by residues H83, E85, D87, H88, H151, D170, and H233. A Flavodoxin-like domain is found at 259 to 399 (VTVIYDTMHG…ACFEAGRKLA (141 aa)). Residues 265–270 (TMHGST), 317–320 (TIYD), and 351–356 (SMGGNG) contribute to the FMN site.

It in the N-terminal section; belongs to the zinc metallo-hydrolase group 3 family. Homodimer. Homotetramer. The tetramer is composed of two functional dimers. FMN is required as a cofactor. It depends on Fe cation as a cofactor.

The catalysed reaction is 2 reduced coenzyme F420-(gamma-L-Glu)(n) + O2 = 2 oxidized coenzyme F420-(gamma-L-Glu)(n) + 2 H2O + 2 H(+). Functionally, catalyzes the oxidation of F420H(2) with O(2). May be involved in O(2) detoxification, reducing the intracellular O(2) concentration to a level allowing growth at the expense of methane formation. The protein is Coenzyme F420H(2) oxidase of Methanothermobacter marburgensis (strain ATCC BAA-927 / DSM 2133 / JCM 14651 / NBRC 100331 / OCM 82 / Marburg) (Methanobacterium thermoautotrophicum).